A 474-amino-acid chain; its full sequence is Probable cytosol aminopeptidase (474 aa).

The Mn(2+) site is built by Lys-237 and Asp-242. The active site involves Lys-249. Mn(2+)-binding residues include Asp-260, Asp-319, and Glu-321. Arg-323 is a catalytic residue.

Belongs to the peptidase M17 family. The cofactor is Mn(2+).

The protein resides in the cytoplasm. It catalyses the reaction Release of an N-terminal amino acid, Xaa-|-Yaa-, in which Xaa is preferably Leu, but may be other amino acids including Pro although not Arg or Lys, and Yaa may be Pro. Amino acid amides and methyl esters are also readily hydrolyzed, but rates on arylamides are exceedingly low.. It carries out the reaction Release of an N-terminal amino acid, preferentially leucine, but not glutamic or aspartic acids.. Functionally, presumably involved in the processing and regular turnover of intracellular proteins. Catalyzes the removal of unsubstituted N-terminal amino acids from various peptides. The protein is Probable cytosol aminopeptidase of Helicobacter hepaticus (strain ATCC 51449 / 3B1).